The following is a 476-amino-acid chain: Angiotensinogen (476 aa).

The first 24 residues, 1 to 24 (MAPAGVSLRATILCLLAWAGLAAG), serve as a signal peptide directing secretion. A Beta-decarboxylated aspartate; in form angiotensin-A modification is found at D25. Residues N38, N161, N295, and N319 are each glycosylated (N-linked (GlcNAc...) asparagine). C42 and C162 are joined by a disulfide.

This sequence belongs to the serpin family. In terms of assembly, during pregnancy, exists as a disulfide-linked 2:2 heterotetramer with the proform of PRG2 and as a complex (probably a 2:2:2 heterohexamer) with pro-PRG2 and C3dg. Beta-decarboxylation of Asp-25 in angiotensin-2, by mononuclear leukocytes produces alanine. The resulting peptide form, angiotensin-A, has the same affinity for the AT1 receptor as angiotensin-2, but a higher affinity for the AT2 receptor. In terms of processing, in response to low blood pressure, the enzyme renin/REN cleaves angiotensinogen to produce angiotensin-1. Angiotensin-1 is a substrate of ACE (angiotensin converting enzyme) that removes a dipeptide to yield the physiologically active peptide angiotensin-2. Angiotensin-1 and angiotensin-2 can be further processed to generate angiotensin-3, angiotensin-4. Angiotensin 1-9 is cleaved from angiotensin-1 by ACE2 and can be further processed by ACE to produce angiotensin 1-7, angiotensin 1-5 and angiotensin 1-4. Angiotensin 1-7 has also been proposed to be cleaved from angiotensin-2 by ACE2 or from angiotensin-1 by MME (neprilysin). Post-translationally, the disulfide bond is labile. Angiotensinogen is present in the circulation in a near 40:60 ratio with the oxidized disulfide-bonded form, which preferentially interacts with receptor-bound renin. In terms of tissue distribution, expressed by the liver and secreted in plasma.

It localises to the secreted. Essential component of the renin-angiotensin system (RAS), a potent regulator of blood pressure, body fluid and electrolyte homeostasis. In terms of biological role, acts directly on vascular smooth muscle as a potent vasoconstrictor, affects cardiac contractility and heart rate through its action on the sympathetic nervous system, and alters renal sodium and water absorption through its ability to stimulate the zona glomerulosa cells of the adrenal cortex to synthesize and secrete aldosterone. Acts by binding to angiotensin receptors AGTR1 and AGTR2. Also binds the DEAR/FBXW7-AS1 receptor. Its function is as follows. Stimulates aldosterone release. Functionally, is a ligand for the G-protein coupled receptor MAS1. Has vasodilator and antidiuretic effects. Has an antithrombotic effect that involves MAS1-mediated release of nitric oxide from platelets. The protein is Angiotensinogen of Homo sapiens (Human).